Consider the following 622-residue polypeptide: Transcription factor SKN7 (622 aa).

Positions 1-12 (MSFSTINSNVNK) are enriched in polar residues. The tract at residues 1–29 (MSFSTINSNVNKTTGDSNNNTTENSSTAD) is disordered. Low complexity predominate over residues 13–27 (TTGDSNNNTTENSST). The interval 84-190 (ANEFVRKLFR…GLDNIKRKIP (107 aa)) is DNA-binding domain. Residues 212-303 (TNPNNPSGSL…NNFNTLCSTL (92 aa)) are hydrophobic repeat HR-A/B. Residues 240-260 (FGNLRRRVDKLQKELDMSKME) are a coiled coil. Residues 378–492 (HVLLVEDDAV…DLHSILIRYL (115 aa)) enclose the Response regulatory domain. Position 427 is a 4-aspartylphosphate (Asp-427). Disordered stretches follow at residues 501 to 579 (QQLP…QHHN) and 599 to 622 (TVPH…NQLS). The span at 512-527 (THSNTNTANSNPNTIN) shows a compositional bias: low complexity. Over residues 537-554 (DNPSTTTPVTPGASISSA) the composition is skewed to polar residues. Positions 555–578 (QHVQQGQQEQQHQIFHAQQQQQHH) are enriched in low complexity. Polar residues predominate over residues 600-622 (VPHSSMGSTPQLPQSTLQENQLS).

The protein belongs to the SKN7 family. As to quaternary structure, homotrimer. In terms of processing, the phosphorelay mechanism involves the sequential transfer of a phosphate group from 'His-576' (H1) to 'Asp-1144' (D1) of SLN1, then to 'His-64' (H2) of YPD1 and finally to Asp-427 (D2) of SKN7.

It is found in the nucleus. Transcription factor that is part of a SLN1-YPD1-SKN7 two-component regulatory system, which controls gene expression in response to changes in the osmolarity of the extracellular environment. Under low osmotic conditions, phosphorylated and activated by the phosphorelay intermediate protein YPD1. Also activated in response to oxidative stress, independent on the two-component regulatory system. Regulates heat shock genes in response to oxidative stress and genes involved in cell wall integrity in response to osmotic changes. The sequence is that of Transcription factor SKN7 (SKN7) from Saccharomyces cerevisiae (strain ATCC 204508 / S288c) (Baker's yeast).